A 394-amino-acid chain; its full sequence is Salivary plasminogen activator gamma (394 aa).

The signal sequence occupies residues 1–36 (MVNTMKTKLLCVLLLCGAVFSLPRQETYRQLARGSR). Positions 45–126 (CYKDQGVTYR…TSESCSVPVC (82 aa)) constitute a Kringle domain. 9 disulfides stabilise this stretch: cysteine 45–cysteine 126, cysteine 66–cysteine 108, cysteine 97–cysteine 121, cysteine 131–cysteine 262, cysteine 174–cysteine 190, cysteine 182–cysteine 251, cysteine 276–cysteine 351, cysteine 308–cysteine 324, and cysteine 341–cysteine 369. Positions 143–393 (STGGLFTDIT…YLGWIRDNMR (251 aa)) constitute a Peptidase S1 domain. Residues histidine 189 and aspartate 238 each act as charge relay system in the active site. An N-linked (GlcNAc...) asparagine glycan is attached at asparagine 315. Serine 345 functions as the Charge relay system in the catalytic mechanism.

Belongs to the peptidase S1 family. Monomer.

The protein resides in the secreted. It catalyses the reaction Specific cleavage of Arg-|-Val bond in plasminogen to form plasmin.. In terms of biological role, probably essential to support the feeding habits of this exclusively haematophagous animal. Probable potent thrombolytic agent. This is Salivary plasminogen activator gamma from Desmodus rotundus (Vampire bat).